The primary structure comprises 479 residues: Ribosomal RNA small subunit methyltransferase F (479 aa).

S-adenosyl-L-methionine is bound by residues 125 to 131 (AAAPGSK), Glu-149, Asp-176, and Asp-194. Catalysis depends on Cys-247, which acts as the Nucleophile.

It belongs to the class I-like SAM-binding methyltransferase superfamily. RsmB/NOP family.

Its subcellular location is the cytoplasm. It carries out the reaction cytidine(1407) in 16S rRNA + S-adenosyl-L-methionine = 5-methylcytidine(1407) in 16S rRNA + S-adenosyl-L-homocysteine + H(+). Functionally, specifically methylates the cytosine at position 1407 (m5C1407) of 16S rRNA. This is Ribosomal RNA small subunit methyltransferase F from Salmonella enteritidis PT4 (strain P125109).